Consider the following 144-residue polypeptide: Phospholipase A2, membrane associated (144 aa).

An N-terminal signal peptide occupies residues 1 to 20; it reads MKTLLLLAVIMAIGLLQVHG. Cystine bridges form between C46-C137, C48-C64, C63-C117, C69-C144, C70-C110, C79-C103, and C97-C108. Residues Y47, G49, and S51 each contribute to the Ca(2+) site. Residue H67 is part of the active site. D68 serves as a coordination point for Ca(2+). D111 is an active-site residue.

The protein belongs to the phospholipase A2 family. Requires Ca(2+) as cofactor.

It localises to the secreted. The protein resides in the cell membrane. The protein localises to the mitochondrion outer membrane. It carries out the reaction a 1,2-diacyl-sn-glycero-3-phosphoethanolamine + H2O = a 1-acyl-sn-glycero-3-phosphoethanolamine + a fatty acid + H(+). The catalysed reaction is 1-hexadecanoyl-2-(9Z-octadecenoyl)-sn-glycero-3-phosphoethanolamine + H2O = 1-hexadecanoyl-sn-glycero-3-phosphoethanolamine + (9Z)-octadecenoate + H(+). The enzyme catalyses 1-hexadecanoyl-2-(9Z,12Z-octadecadienoyl)-sn-glycero-3-phosphoethanolamine + H2O = 1-hexadecanoyl-sn-glycero-3-phosphoethanolamine + (9Z,12Z)-octadecadienoate + H(+). It catalyses the reaction 1-hexadecanoyl-2-(5Z,8Z,11Z,14Z-eicosatetraenoyl)-sn-glycero-3-phosphoethanolamine + H2O = 1-hexadecanoyl-sn-glycero-3-phosphoethanolamine + (5Z,8Z,11Z,14Z)-eicosatetraenoate + H(+). It carries out the reaction N-hexadecanoyl-1,2-di-(9Z-octadecenoyl)-sn-glycero-3-phosphoethanolamine + H2O = N-hexadecanoyl-1-(9Z-octadecenoyl)-sn-glycero-3-phosphoethanolamine + (9Z)-octadecenoate + H(+). The catalysed reaction is 1,2-dihexadecanoyl-sn-glycero-3-phospho-(1'-sn-glycerol) + H2O = 1-hexadecanoyl-sn-glycero-3-phospho-(1'-sn-glycerol) + hexadecanoate + H(+). The enzyme catalyses 1-hexadecanoyl-2-(9Z-octadecenoyl)-sn-glycero-3-phosphoglycerol + H2O = 1-hexadecanoyl-sn-glycero-3-phosphoglycerol + (9Z)-octadecenoate + H(+). It catalyses the reaction 1-hexadecanoyl-2-(9Z-octadecenoyl)-sn-glycero-3-phospho-(1'-sn-glycerol) + H2O = 1-hexadecanoyl-sn-glycero-3-phospho-(1'-sn-glycerol) + (9Z)-octadecenoate + H(+). It carries out the reaction a 1,2-diacyl-sn-glycero-3-phosphocholine + H2O = a 1-acyl-sn-glycero-3-phosphocholine + a fatty acid + H(+). The catalysed reaction is 1,2-dihexadecanoyl-sn-glycero-3-phosphocholine + H2O = 1-hexadecanoyl-sn-glycero-3-phosphocholine + hexadecanoate + H(+). The enzyme catalyses 1-hexadecanoyl-2-(9Z-octadecenoyl)-sn-glycero-3-phosphocholine + H2O = 1-hexadecanoyl-sn-glycero-3-phosphocholine + (9Z)-octadecenoate + H(+). It catalyses the reaction 1-hexadecanoyl-2-(9Z,12Z-octadecadienoyl)-sn-glycero-3-phosphocholine + H2O = (9Z,12Z)-octadecadienoate + 1-hexadecanoyl-sn-glycero-3-phosphocholine + H(+). It carries out the reaction 1-hexadecanoyl-2-(4Z,7Z,10Z,13Z,16Z,19Z-docosahexaenoyl)-sn-glycero-3-phosphocholine + H2O = (4Z,7Z,10Z,13Z,16Z,19Z)-docosahexaenoate + 1-hexadecanoyl-sn-glycero-3-phosphocholine + H(+). In terms of biological role, secretory calcium-dependent phospholipase A2 that primarily targets extracellular phospholipids with implications in host antimicrobial defense, inflammatory response and tissue regeneration. Hydrolyzes the ester bond of the fatty acyl group attached at sn-2 position of phospholipids (phospholipase A2 activity) with preference for phosphatidylethanolamines and phosphatidylglycerols over phosphatidylcholines. Contributes to lipid remodeling of cellular membranes and generation of lipid mediators involved in pathogen clearance. Displays bactericidal activity against Gram-positive bacteria by directly hydrolyzing phospholipids of the bacterial membrane. Upon sterile inflammation, targets membrane phospholipids of extracellular mitochondria released from activated platelets, generating free unsaturated fatty acids such as arachidonate that is used by neighboring leukocytes to synthesize inflammatory eicosanoids such as leukotrienes. Simultaneously, by compromising mitochondrial membrane integrity, promotes the release in circulation of potent damage-associated molecular pattern molecules that activate the innate immune response. Plays a stem cell regulator role in the intestinal crypt. Within intracellular compartment mediates Paneth cell differentiation and its stem cell supporting functions by inhibiting Wnt signaling pathway in intestinal stem cell (ICS). Secreted in the intestinal lumen upon inflammation, acts in an autocrine way and promotes prostaglandin E2 synthesis that stimulates Wnt signaling pathway in ICS cells and tissue regeneration. May play a role in the biosynthesis of N-acyl ethanolamines that regulate energy metabolism and inflammation. Hydrolyzes N-acyl phosphatidylethanolamines to N-acyl lysophosphatidylethanolamines, which are further cleaved by a lysophospholipase D to release N-acyl ethanolamines. Independent of its catalytic activity, acts as a ligand for integrins. Binds to and activates integrins ITGAV:ITGB3, ITGA4:ITGB1 and ITGA5:ITGB1. Binds to a site (site 2) which is distinct from the classical ligand-binding site (site 1) and induces integrin conformational changes and enhanced ligand binding to site 1. Induces cell proliferation in an integrin-dependent manner. This chain is Phospholipase A2, membrane associated (PLA2G2A), found in Bos taurus (Bovine).